A 779-amino-acid polypeptide reads, in one-letter code: Vezatin (779 aa).

Helical transmembrane passes span 139 to 159 (LATP…LLVM) and 162 to 182 (TWWI…YLVI). Residues 430-462 (VRSLQLHLKALLNEVIILEDELEKLVCTKETQE) are a coiled coil. Disordered regions lie at residues 618 to 719 (PVDP…DSLQ) and 757 to 779 (EQTF…IEEK). Over residues 625-634 (ISNSEPSMNS) the composition is skewed to polar residues. Basic and acidic residues predominate over residues 638 to 649 (KVSKNDTEEESN). Residues 706–719 (GLTTAPPTPRDSLQ) show a composition bias toward polar residues. The segment covering 770-779 (EENKNEIEEK) has biased composition (basic and acidic residues).

This sequence belongs to the vezatin family. In terms of assembly, interacts with USH2A (via the cytoplasmic region); the interaction associates VEZT with the USH2 complex at the stereocilia base. Interacts with myosin MYO7A and the cadherin-catenins complex.

Its subcellular location is the cell membrane. The protein localises to the cell projection. It localises to the stereocilium membrane. It is found in the cell junction. The protein resides in the adherens junction. Its subcellular location is the nucleus. The protein localises to the cytoplasmic vesicle. It localises to the secretory vesicle. It is found in the acrosome. Its function is as follows. Plays a pivotal role in the establishment of adherens junctions and their maintenance in adult life. Required for morphogenesis of the preimplantation embryo, and for the implantation process. Functionally, (Microbial infection) In case of Listeria infection, promotes bacterial internalization by participating in myosin VIIa recruitment to the entry site. In Homo sapiens (Human), this protein is Vezatin (VEZT).